Consider the following 437-residue polypeptide: UDP-N-acetylmuramate--L-alanine ligase (437 aa).

Position 108-114 (108-114) interacts with ATP; sequence GAHGKTS.

Belongs to the MurCDEF family.

The protein resides in the cytoplasm. It carries out the reaction UDP-N-acetyl-alpha-D-muramate + L-alanine + ATP = UDP-N-acetyl-alpha-D-muramoyl-L-alanine + ADP + phosphate + H(+). It participates in cell wall biogenesis; peptidoglycan biosynthesis. In terms of biological role, cell wall formation. This chain is UDP-N-acetylmuramate--L-alanine ligase, found in Staphylococcus aureus.